A 185-amino-acid chain; its full sequence is Ribosome-recycling factor (185 aa).

It belongs to the RRF family.

The protein resides in the cytoplasm. Its function is as follows. Responsible for the release of ribosomes from messenger RNA at the termination of protein biosynthesis. May increase the efficiency of translation by recycling ribosomes from one round of translation to another. The chain is Ribosome-recycling factor from Streptococcus pneumoniae (strain 70585).